Consider the following 290-residue polypeptide: ATP synthase gamma chain (290 aa).

This sequence belongs to the ATPase gamma chain family. In terms of assembly, F-type ATPases have 2 components, CF(1) - the catalytic core - and CF(0) - the membrane proton channel. CF(1) has five subunits: alpha(3), beta(3), gamma(1), delta(1), epsilon(1). CF(0) has three main subunits: a, b and c.

Its subcellular location is the cell membrane. In terms of biological role, produces ATP from ADP in the presence of a proton gradient across the membrane. The gamma chain is believed to be important in regulating ATPase activity and the flow of protons through the CF(0) complex. This Chloroflexus aurantiacus (strain ATCC 29366 / DSM 635 / J-10-fl) protein is ATP synthase gamma chain.